The sequence spans 133 residues: Large ribosomal subunit protein uL15 (133 aa).

Residues 1-64 (MGLENLKPAK…QPLQRRLPKI (64 aa)) are disordered.

This sequence belongs to the universal ribosomal protein uL15 family. In terms of assembly, part of the 50S ribosomal subunit.

Binds to the 23S rRNA. In Helicobacter pylori (strain G27), this protein is Large ribosomal subunit protein uL15.